We begin with the raw amino-acid sequence, 311 residues long: DNA replication terminus site-binding protein (311 aa).

Belongs to the Tus family.

Its subcellular location is the cytoplasm. Trans-acting protein required for termination of DNA replication. Binds to DNA replication terminator sequences (terA to terF) to prevent the passage of replication forks. The termination efficiency will be affected by the affinity of this protein for the terminator sequence. This chain is DNA replication terminus site-binding protein, found in Yersinia pseudotuberculosis serotype O:1b (strain IP 31758).